An 81-amino-acid polypeptide reads, in one-letter code: Cell division protein ZapB (81 aa).

Residues 5-81 (LEVFEKLESK…QALLGRMEEV (77 aa)) adopt a coiled-coil conformation. Residues 43–64 (VQSAQHGREELERENSQLKEQQ) are disordered. A compositionally biased stretch (basic and acidic residues) spans 48 to 59 (HGREELERENSQ).

Belongs to the ZapB family. As to quaternary structure, homodimer. The ends of the coiled-coil dimer bind to each other, forming polymers. Interacts with FtsZ.

It is found in the cytoplasm. Its function is as follows. Non-essential, abundant cell division factor that is required for proper Z-ring formation. It is recruited early to the divisome by direct interaction with FtsZ, stimulating Z-ring assembly and thereby promoting cell division earlier in the cell cycle. Its recruitment to the Z-ring requires functional FtsA or ZipA. The protein is Cell division protein ZapB of Klebsiella pneumoniae subsp. pneumoniae (strain ATCC 700721 / MGH 78578).